Consider the following 349-residue polypeptide: Terpene synthase 2 (349 aa).

The short motif at 84-89 (DDLFDG) is the DDxx(x)D/E motif element. An NDxxSxxxD/E motif motif is present at residues 229–237 (NDCVSYEKE).

It belongs to the terpene synthase family.

The enzyme catalyses (2E,6E)-farnesyl diphosphate = (3S)-(+)-asterisca-2(9),6-diene + diphosphate. It carries out the reaction (2E)-geranyl diphosphate = (Z)-beta-ocimene + diphosphate. It catalyses the reaction (2E)-geranyl diphosphate + H2O = linalool + diphosphate. In terms of biological role, terpene synthase that converts its substrate farnesyl diphosphate (FPP) into the sesquiterpene (3S)-(+)-asterisca-2(9),6-diene. Is also able to convert geranyl diphosphate (GPP) into a mixture of monoterpenes including (Z)-beta-ocimene, allo-ocimene and linalool. The sequence is that of Terpene synthase 2 from Dictyostelium discoideum (Social amoeba).